Here is an 887-residue protein sequence, read N- to C-terminus: Alanine--tRNA ligase (887 aa).

Zn(2+) contacts are provided by histidine 573, histidine 577, cysteine 676, and histidine 680.

It belongs to the class-II aminoacyl-tRNA synthetase family. The cofactor is Zn(2+).

The protein resides in the cytoplasm. It catalyses the reaction tRNA(Ala) + L-alanine + ATP = L-alanyl-tRNA(Ala) + AMP + diphosphate. Catalyzes the attachment of alanine to tRNA(Ala) in a two-step reaction: alanine is first activated by ATP to form Ala-AMP and then transferred to the acceptor end of tRNA(Ala). Also edits incorrectly charged Ser-tRNA(Ala) and Gly-tRNA(Ala) via its editing domain. The protein is Alanine--tRNA ligase of Corynebacterium jeikeium (strain K411).